We begin with the raw amino-acid sequence, 576 residues long: S-layer protein (576 aa).

The signal sequence occupies residues 1 to 23 (KKIGAIAAGSAMVASALATGVFA). N-linked (GlcNAc...) asparagine glycosylation is found at N102 and N132.

Belongs to the Mj S-layer protein family. In terms of processing, N-linked glycans consist of the 779 Da trisaccharide beta-ManNAc(Thr)-(1-4)-beta-GlcNAc3NAcA-(1-3)-beta-GlcNAc.

The protein localises to the secreted. It localises to the cell wall. Its subcellular location is the S-layer. Its function is as follows. S-layer protein. The S-layer is a paracrystalline mono-layered assembly of proteins which coat the surface of the cell. The polypeptide is S-layer protein (sla) (Methanococcus voltae).